A 481-amino-acid polypeptide reads, in one-letter code: Glutamate--glyoxylate aminotransferase 1 (481 aa).

Lysine 291 is modified (N6-(pyridoxal phosphate)lysine). Positions 479–481 (SKM) match the Peroxisomal targeting signal motif.

It belongs to the class-I pyridoxal-phosphate-dependent aminotransferase family. Alanine aminotransferase subfamily. As to quaternary structure, homodimer. Pyridoxal 5'-phosphate is required as a cofactor. In terms of processing, the N-terminus is blocked. In terms of tissue distribution, mostly expressed in leaves, and, to a lower extent, in shoots, stems, flowers, seedlings and green siliques.

The protein localises to the peroxisome. The catalysed reaction is L-alanine + 2-oxoglutarate = pyruvate + L-glutamate. The enzyme catalyses glyoxylate + L-alanine = glycine + pyruvate. It catalyses the reaction glycine + 2-oxoglutarate = glyoxylate + L-glutamate. The protein operates within amino-acid biosynthesis; glycine biosynthesis; glycine from glyoxylate: step 1/1. It functions in the pathway photosynthesis; C4 acid pathway. Its pathway is amino-acid degradation; L-alanine degradation via transaminase pathway; pyruvate from L-alanine: step 1/1. In terms of biological role, catalyzes the glutamate:glyoxylate (GGT or GGAT), alanine:glyoxylate (AGT), alanine:2-oxoglutarate (AKT) and glutamate:pyruvate (GPT) aminotransferase reactions in peroxisomes. Required for abscisic acid (ABA)- and stress-mediated responses in an H(2)O(2)-dependent manner. Functions as a photorespiratory aminotransferase that modulates amino acid content during photorespiration (GGAT activity); promotes serine, glycine and citrulline metabolism in response to light. This chain is Glutamate--glyoxylate aminotransferase 1 (GGAT1), found in Arabidopsis thaliana (Mouse-ear cress).